Reading from the N-terminus, the 88-residue chain is U13-theraphotoxin-Cg1a (88 aa).

An N-terminal signal peptide occupies residues 1–21; that stretch reads MKVSVLITLAVLGVMFVWASA. The propeptide occupies 22-52; it reads AELEQSGSDQKDSDSPAWLKSMERIFQSEER. 3 disulfides stabilise this stretch: cysteine 54-cysteine 68, cysteine 61-cysteine 73, and cysteine 67-cysteine 80.

This sequence belongs to the neurotoxin 10 (Hwtx-1) family. 41 (Jztx-36) subfamily. Expressed by the venom gland.

Its subcellular location is the secreted. Probable ion channel inhibitor. The chain is U13-theraphotoxin-Cg1a from Chilobrachys guangxiensis (Chinese earth tiger tarantula).